The following is a 161-amino-acid chain: UPF0303 protein Spro_1996 (161 aa).

It belongs to the UPF0303 family.

The polypeptide is UPF0303 protein Spro_1996 (Serratia proteamaculans (strain 568)).